The primary structure comprises 139 residues: MINFNYETEFSLDNEQAFTDWLSAVIVSEEKNEGEINYIFCDDEYLHKINVEYLNHDTLTDIISFDYTVGNEISGDIFVSVERVEDNAKDFNVSFEEELKRVLAHGILHYCGYKDKSDADAELMRSKEDEKIAMFHVEQ.

Zn(2+)-binding residues include histidine 105, histidine 109, and aspartate 115.

It belongs to the endoribonuclease YbeY family. Zn(2+) serves as cofactor.

Its subcellular location is the cytoplasm. Its function is as follows. Single strand-specific metallo-endoribonuclease involved in late-stage 70S ribosome quality control and in maturation of the 3' terminus of the 16S rRNA. The polypeptide is Endoribonuclease YbeY (Flavobacterium johnsoniae (strain ATCC 17061 / DSM 2064 / JCM 8514 / BCRC 14874 / CCUG 350202 / NBRC 14942 / NCIMB 11054 / UW101) (Cytophaga johnsonae)).